Reading from the N-terminus, the 1108-residue chain is Eukaryotic translation initiation factor 2-alpha kinase 3 (1108 aa).

The first 27 residues, 1 to 27 (MERATQPRPRALLLLFLLLGCAAGISA), serve as a signal peptide directing secretion. Over 28–506 (VARARSLLAP…HYSKNIRKKD (479 aa)) the chain is Lumenal. The disordered stretch occupies residues 71 to 92 (EALPAASGEQESRATESDDDVE). N253 carries N-linked (GlcNAc...) asparagine glycosylation. Residues 507 to 527 (PILLLHWWKEIFGTILLCIVA) form a helical membrane-spanning segment. Residues 528–1108 (TTFIVRRLFH…SSTFSPLPGN (581 aa)) are Cytoplasmic-facing. Residues 542-563 (RQRKESETQCQTESKYDSVSAD) form a disordered region. The region spanning 585–1069 (FEPIQCMGRG…ATDIIENAVF (485 aa)) is the Protein kinase domain. An ATP-binding site is contributed by 591-599 (MGRGGFGVV). Phosphotyrosine; by autocatalysis is present on Y611. K614 contacts ATP. The tract at residues 639-880 (EHPGIVRYFN…SPKVYLYIQM (242 aa)) is insert loop. S707 bears the Phosphoserine mark. 2 disordered regions span residues 772–818 (DEGH…RMNR) and 832–856 (FKHS…TTLS). The span at 785–798 (SPYTRSREGTSSSI) shows a compositional bias: polar residues. T794 carries the phosphothreonine modification. A compositionally biased stretch (low complexity) spans 837-856 (SRSSSEATLSTSPTRPTTLS). The Proton acceptor role is filled by D929. Position 974 is a phosphothreonine (T974). Residues 1080–1108 (LRQRSRSLSSSGTKHSRQPSSTFSPLPGN) form a disordered region. Phosphoserine is present on S1086. Residues 1097–1108 (QPSSTFSPLPGN) are compositionally biased toward polar residues.

This sequence belongs to the protein kinase superfamily. Ser/Thr protein kinase family. GCN2 subfamily. As to quaternary structure, forms dimers with HSPA5/BIP in resting cells. Homotetramerizes in response to endoplasmic reticulum (ER) stress, leading to its activation. Interacts with HSP90B1/GRP94. Interacts with DNAJC3; inhibiting EIF2AK3/PERK activity. Interacts with ATAD3A; ATAD3A and EIF2S1/eIF-2-alpha occupy a common binding site within the cytoplasmic loop of EIF2AK3/PERK, leading to prevent EIF2AK3/PERK association with its substrate EIF2S1/eIF-2-alpha. Interacts with MFN2. Interacts with TMEM33. Interacts with PDIA6. Interacts with LACC1. In terms of processing, oligomerization of the N-terminal ER luminal domain by ER stress promotes EIF2AK3/PERK trans-autophosphorylation of the C-terminal cytoplasmic kinase domain at multiple residues including Thr-974 on the kinase activation loop. Autophosphorylated at Tyr-611 following endoplasmic reticulum stress, leading to activate its activity. Dephosphorylated at Tyr-611 by PTPN1/PTP1B, leading to inactivate its enzyme activity. Phosphorylation at Thr-794 by AKT (AKT1, AKT2 and/or AKT3) inactivates EIF2AK3/PERK. ADP-ribosylated by PARP16 upon ER stress, which increases kinase activity. As to expression, ubiquitous.

It localises to the endoplasmic reticulum membrane. It catalyses the reaction L-seryl-[protein] + ATP = O-phospho-L-seryl-[protein] + ADP + H(+). The catalysed reaction is L-threonyl-[protein] + ATP = O-phospho-L-threonyl-[protein] + ADP + H(+). It carries out the reaction L-tyrosyl-[protein] + ATP = O-phospho-L-tyrosyl-[protein] + ADP + H(+). With respect to regulation, inhibited by HSPA5/BIP in absence of stress. Perturbation in protein folding in the endoplasmic reticulum (ER) promotes reversible dissociation from HSPA5/BIP and oligomerization, resulting in trans-autophosphorylation and kinase activity induction. Inactivated following phosphorylation at Thr-794 by AKT (AKT1, AKT2 and/or AKT3). Inhibited by ATAD3A at mitochondria-endoplasmic reticulum contact sites, providing a safe haven for mitochondrial protein translation during ER stress. Its function is as follows. Metabolic-stress sensing protein kinase that phosphorylates the alpha subunit of eukaryotic translation initiation factor 2 (EIF2S1/eIF-2-alpha) in response to various stress, such as unfolded protein response (UPR). Key effector of the integrated stress response (ISR) to unfolded proteins: EIF2AK3/PERK specifically recognizes and binds misfolded proteins, leading to its activation and EIF2S1/eIF-2-alpha phosphorylation. EIF2S1/eIF-2-alpha phosphorylation in response to stress converts EIF2S1/eIF-2-alpha in a global protein synthesis inhibitor, leading to a global attenuation of cap-dependent translation, while concomitantly initiating the preferential translation of ISR-specific mRNAs, such as the transcriptional activators ATF4 and QRICH1, and hence allowing ATF4- and QRICH1-mediated reprogramming. The EIF2AK3/PERK-mediated unfolded protein response increases mitochondrial oxidative phosphorylation by promoting ATF4-mediated expression of COX7A2L/SCAF1, thereby increasing formation of respiratory chain supercomplexes. In contrast to most subcellular compartments, mitochondria are protected from the EIF2AK3/PERK-mediated unfolded protein response due to EIF2AK3/PERK inhibition by ATAD3A at mitochondria-endoplasmic reticulum contact sites. In addition to EIF2S1/eIF-2-alpha, also phosphorylates NFE2L2/NRF2 in response to stress, promoting release of NFE2L2/NRF2 from the BCR(KEAP1) complex, leading to nuclear accumulation and activation of NFE2L2/NRF2. Serves as a critical effector of unfolded protein response (UPR)-induced G1 growth arrest due to the loss of cyclin-D1 (CCND1). Involved in control of mitochondrial morphology and function. The chain is Eukaryotic translation initiation factor 2-alpha kinase 3 (Eif2ak3) from Rattus norvegicus (Rat).